Consider the following 169-residue polypeptide: Thaumatin-like pathogenesis-related protein 3 (169 aa).

A signal peptide spans methionine 1 to alanine 21.

This sequence belongs to the thaumatin family.

Functionally, associated with resistance against stem rust fungi. The chain is Thaumatin-like pathogenesis-related protein 3 (RASTL-3) from Avena sativa (Oat).